Consider the following 235-residue polypeptide: Small ribosomal subunit protein uS2c (235 aa).

It belongs to the universal ribosomal protein uS2 family.

The protein resides in the plastid. Its subcellular location is the chloroplast. The sequence is that of Small ribosomal subunit protein uS2c (rps2) from Anthoceros angustus (Hornwort).